The primary structure comprises 544 residues: Cytochrome P450 monooxygenase cle2 (544 aa).

Residues 19 to 39 (LGLLIGLSLILSITWTAYTIL) form a helical membrane-spanning segment. The disordered stretch occupies residues 273–305 (RTQQVEQSIEKNTKNEKKEDEDEDQNEDEETPG). Basic and acidic residues predominate over residues 280 to 290 (SIEKNTKNEKK). Positions 291–304 (EDEDEDQNEDEETP) are enriched in acidic residues. Cysteine 478 contributes to the heme binding site.

This sequence belongs to the cytochrome P450 family. Heme serves as cofactor.

It is found in the membrane. It participates in secondary metabolite biosynthesis; terpenoid biosynthesis. Functionally, cytochrome P450 monooxygenase; part of the cluster A that mediates the biosynthesis of chevalone E and its oxidized derivatives that possess a unique five-membered lactone ring and can synergistically enhance the cytotoxicity of doxorubicin (DOX) in breast cancer cells. Within the pathway, cle2 is involved in hydroxylation of the chavalone E scaffold at position C-20 and contributes with cle4 to the production of seven oxidation derivatives. The molecular scaffold is commonly biosynthesized by a series of enzymes including the non-reducing polyketide synthase (NR-PKS) cle1 that produces the alpha-pyrone triacetic acid lactone (TAL); The membrane-bound prenyltransferase cle5 that accepts TAL as its substrate to perform a C-3 geranylgeranylation reaction, in which the pathway-dedicated GGPS cle6 is required to provide GGPP, the other substrate of cle5; the FAD-dependent monooxygenase Cle3 that forms an (S)-epoxide ring at the terminal olefin of the geranylgeranyl group; and the terpene cyclase Cle7 that catalyzes the cyclization of the prenyl group that yields the pentacyclic pathway intermediate chevalone E. Chevalone E can derivatize into seven new oxidized analogs by the cytochrome P450 monooxygenases cle2 (acting at C-20) and cle4 (acting at C-11 and C-12). The chain is Cytochrome P450 monooxygenase cle2 from Aspergillus versicolor.